A 171-amino-acid polypeptide reads, in one-letter code: Group 1 truncated hemoglobin LI410 (171 aa).

The transit peptide at methionine 1–alanine 23 directs the protein to the chloroplast. The heme site is built by tyrosine 63 and histidine 111.

The protein belongs to the truncated hemoglobin family. Group I subfamily. Heme serves as cofactor.

It is found in the plastid. It localises to the chloroplast. The protein is Group 1 truncated hemoglobin LI410 (LI410) of Chlamydomonas moewusii (Chlamydomonas eugametos).